Here is a 342-residue protein sequence, read N- to C-terminus: Pre-mRNA-splicing factor 18 (342 aa).

It belongs to the PRP18 family. Interacts with the spliceosome. Part of a complex containing U4/U6 snRNPs.

The protein resides in the nucleus speckle. Functionally, participates in the second step of pre-mRNA splicing. The polypeptide is Pre-mRNA-splicing factor 18 (prpf18) (Danio rerio (Zebrafish)).